Reading from the N-terminus, the 412-residue chain is Argininosuccinate synthase (412 aa).

10 to 18 (AYSGGLDTS) is an ATP binding site. Tyr89 contributes to the L-citrulline binding site. Gly119 is an ATP binding site. Residues Thr121, Asn125, and Asp126 each contribute to the L-aspartate site. L-citrulline is bound at residue Asn125. L-citrulline is bound by residues Arg129, Ser177, Glu261, and Tyr273.

The protein belongs to the argininosuccinate synthase family. Type 1 subfamily. As to quaternary structure, homotetramer.

It localises to the cytoplasm. The catalysed reaction is L-citrulline + L-aspartate + ATP = 2-(N(omega)-L-arginino)succinate + AMP + diphosphate + H(+). It participates in amino-acid biosynthesis; L-arginine biosynthesis; L-arginine from L-ornithine and carbamoyl phosphate: step 2/3. This is Argininosuccinate synthase from Bifidobacterium longum subsp. infantis (strain ATCC 15697 / DSM 20088 / JCM 1222 / NCTC 11817 / S12).